A 257-amino-acid chain; its full sequence is Ribosomal RNA small subunit methyltransferase J (257 aa).

S-adenosyl-L-methionine-binding positions include 107-108 (RD), 123-124 (ER), and Asp-177.

It belongs to the methyltransferase superfamily. RsmJ family.

It localises to the cytoplasm. It carries out the reaction guanosine(1516) in 16S rRNA + S-adenosyl-L-methionine = N(2)-methylguanosine(1516) in 16S rRNA + S-adenosyl-L-homocysteine + H(+). Specifically methylates the guanosine in position 1516 of 16S rRNA. The protein is Ribosomal RNA small subunit methyltransferase J of Haemophilus influenzae (strain 86-028NP).